The sequence spans 212 residues: Large ribosomal subunit protein mL48 (212 aa).

Residues 1–28 constitute a mitochondrion transit peptide; that stretch reads MNGALGKVLCLKNDTIFKQAFSLLRFRT. Lysine 199 is modified (N6-succinyllysine).

Belongs to the mitochondrion-specific ribosomal protein mL48 family. As to quaternary structure, component of the mitochondrial ribosome large subunit (39S) which comprises a 16S rRNA and about 50 distinct proteins. Interacts with OXA1L.

The protein resides in the mitochondrion. In Bos taurus (Bovine), this protein is Large ribosomal subunit protein mL48 (MRPL48).